A 303-amino-acid chain; its full sequence is Cobalamin biosynthesis protein CobD (303 aa).

4 helical membrane-spanning segments follow: residues L65–L85, D147–Y167, A235–I255, and L283–A303.

It belongs to the CobD/CbiB family.

It localises to the cell membrane. The protein operates within cofactor biosynthesis; adenosylcobalamin biosynthesis. In terms of biological role, converts cobyric acid to cobinamide by the addition of aminopropanol on the F carboxylic group. This chain is Cobalamin biosynthesis protein CobD, found in Stutzerimonas stutzeri (strain A1501) (Pseudomonas stutzeri).